We begin with the raw amino-acid sequence, 1376 residues long: Mediator of RNA polymerase II transcription subunit 23 (1376 aa).

The span at 1346 to 1369 shows a compositional bias: low complexity; that stretch reads SNSSSVQQTSSASSPTAQSTAGAA. Residues 1346-1376 form a disordered region; it reads SNSSSVQQTSSASSPTAQSTAGAAIPLSVTQ.

The protein belongs to the Mediator complex subunit 23 family. As to quaternary structure, component of the Mediator complex.

The protein localises to the nucleus. Component of the Mediator complex, a coactivator involved in the regulated transcription of nearly all RNA polymerase II-dependent genes. Mediator functions as a bridge to convey information from gene-specific regulatory proteins to the basal RNA polymerase II transcription machinery. Mediator is recruited to promoters by direct interactions with regulatory proteins and serves as a scaffold for the assembly of a functional preinitiation complex with RNA polymerase II and the general transcription factors. This Danio rerio (Zebrafish) protein is Mediator of RNA polymerase II transcription subunit 23 (med23).